A 152-amino-acid polypeptide reads, in one-letter code: Transcription elongation factor Spt5 (152 aa).

The region spanning Glu-99–Leu-129 is the KOW domain.

The protein belongs to the archaeal Spt5 family. Heterodimer composed of Spt4 and Spt5. Interacts with RNA polymerase (RNAP).

Stimulates transcription elongation. The protein is Transcription elongation factor Spt5 of Sulfolobus acidocaldarius (strain ATCC 33909 / DSM 639 / JCM 8929 / NBRC 15157 / NCIMB 11770).